The sequence spans 407 residues: Chorismate synthase (407 aa).

Positions 40 and 46 each coordinate NADP(+). FMN contacts are provided by residues 135-137 (RAS), 256-257 (QA), Gly300, 315-319 (KPIST), and Arg341.

This sequence belongs to the chorismate synthase family. As to quaternary structure, homotetramer. It depends on FMNH2 as a cofactor.

It catalyses the reaction 5-O-(1-carboxyvinyl)-3-phosphoshikimate = chorismate + phosphate. It participates in metabolic intermediate biosynthesis; chorismate biosynthesis; chorismate from D-erythrose 4-phosphate and phosphoenolpyruvate: step 7/7. Its function is as follows. Catalyzes the anti-1,4-elimination of the C-3 phosphate and the C-6 proR hydrogen from 5-enolpyruvylshikimate-3-phosphate (EPSP) to yield chorismate, which is the branch point compound that serves as the starting substrate for the three terminal pathways of aromatic amino acid biosynthesis. This reaction introduces a second double bond into the aromatic ring system. The polypeptide is Chorismate synthase (Mycobacterium leprae (strain Br4923)).